Here is a 130-residue protein sequence, read N- to C-terminus: Probable pilin MJ0835.1 (130 aa).

The propeptide occupies methionine 1–alanine 14. Positions glutamine 15–leucine 23 match the QXSXEXXXL motif.

In terms of processing, the N-terminus is cleaved by the prepilin peptidase EppA, which recognizes the class III signal sequence.

It is found in the secreted. Its subcellular location is the cell surface. The protein resides in the fimbrium. The protein is Probable pilin MJ0835.1 of Methanocaldococcus jannaschii (strain ATCC 43067 / DSM 2661 / JAL-1 / JCM 10045 / NBRC 100440) (Methanococcus jannaschii).